A 187-amino-acid polypeptide reads, in one-letter code: RNA pyrophosphohydrolase (187 aa).

The 144-residue stretch at 6–149 (GYRANVGIIL…KRQVYRQALT (144 aa)) folds into the Nudix hydrolase domain. Positions 38-59 (GGIKSGETPTEAMYRELAEETG) match the Nudix box motif. The interval 166–187 (AYREPLEPVEKNRKKSSDTRQS) is disordered.

This sequence belongs to the Nudix hydrolase family. RppH subfamily. Requires a divalent metal cation as cofactor.

Functionally, accelerates the degradation of transcripts by removing pyrophosphate from the 5'-end of triphosphorylated RNA, leading to a more labile monophosphorylated state that can stimulate subsequent ribonuclease cleavage. In Nitrosomonas europaea (strain ATCC 19718 / CIP 103999 / KCTC 2705 / NBRC 14298), this protein is RNA pyrophosphohydrolase.